We begin with the raw amino-acid sequence, 444 residues long: Tol-Pal system protein TolB (444 aa).

Positions 1–19 (MRNIIYFILLLLFSFKGYA) are cleaved as a signal peptide.

Belongs to the TolB family. The Tol-Pal system is composed of five core proteins: the inner membrane proteins TolA, TolQ and TolR, the periplasmic protein TolB and the outer membrane protein Pal. They form a network linking the inner and outer membranes and the peptidoglycan layer.

It localises to the periplasm. Functionally, part of the Tol-Pal system, which plays a role in outer membrane invagination during cell division and is important for maintaining outer membrane integrity. The sequence is that of Tol-Pal system protein TolB from Rickettsia akari (strain Hartford).